We begin with the raw amino-acid sequence, 76 residues long: Acyl carrier protein (76 aa).

One can recognise a Carrier domain in the interval Met-1–Gln-76. Ser-36 carries the post-translational modification O-(pantetheine 4'-phosphoryl)serine.

This sequence belongs to the acyl carrier protein (ACP) family. Post-translationally, 4'-phosphopantetheine is transferred from CoA to a specific serine of apo-ACP by AcpS. This modification is essential for activity because fatty acids are bound in thioester linkage to the sulfhydryl of the prosthetic group.

It is found in the cytoplasm. The protein operates within lipid metabolism; fatty acid biosynthesis. Functionally, carrier of the growing fatty acid chain in fatty acid biosynthesis. This Nitratidesulfovibrio vulgaris (strain ATCC 29579 / DSM 644 / CCUG 34227 / NCIMB 8303 / VKM B-1760 / Hildenborough) (Desulfovibrio vulgaris) protein is Acyl carrier protein.